Reading from the N-terminus, the 244-residue chain is Ribosomal RNA large subunit methyltransferase E (244 aa).

Residues glycine 81, tryptophan 83, aspartate 109, aspartate 125, and aspartate 149 each coordinate S-adenosyl-L-methionine. The active-site Proton acceptor is the lysine 189.

The protein belongs to the class I-like SAM-binding methyltransferase superfamily. RNA methyltransferase RlmE family.

The protein resides in the cytoplasm. The catalysed reaction is uridine(2552) in 23S rRNA + S-adenosyl-L-methionine = 2'-O-methyluridine(2552) in 23S rRNA + S-adenosyl-L-homocysteine + H(+). Its function is as follows. Specifically methylates the uridine in position 2552 of 23S rRNA at the 2'-O position of the ribose in the fully assembled 50S ribosomal subunit. The polypeptide is Ribosomal RNA large subunit methyltransferase E (Cereibacter sphaeroides (strain ATCC 17029 / ATH 2.4.9) (Rhodobacter sphaeroides)).